We begin with the raw amino-acid sequence, 274 residues long: NH(3)-dependent NAD(+) synthetase (274 aa).

46-53 (GISGGQDS) contacts ATP. Residue aspartate 52 participates in Mg(2+) binding. Arginine 140 serves as a coordination point for deamido-NAD(+). An ATP-binding site is contributed by threonine 160. Glutamate 165 is a binding site for Mg(2+). Lysine 173 and aspartate 180 together coordinate deamido-NAD(+). ATP contacts are provided by lysine 189 and threonine 211. 260-261 (HK) serves as a coordination point for deamido-NAD(+).

Belongs to the NAD synthetase family. As to quaternary structure, homodimer.

The enzyme catalyses deamido-NAD(+) + NH4(+) + ATP = AMP + diphosphate + NAD(+) + H(+). Its pathway is cofactor biosynthesis; NAD(+) biosynthesis; NAD(+) from deamido-NAD(+) (ammonia route): step 1/1. Catalyzes the ATP-dependent amidation of deamido-NAD to form NAD. Uses ammonia as a nitrogen source. The chain is NH(3)-dependent NAD(+) synthetase from Lactococcus lactis subsp. cremoris (strain MG1363).